The primary structure comprises 548 residues: Chaperonin GroEL (548 aa).

Residues Thr-30–Pro-33, Lys-51, Asp-87–Thr-91, Gly-415, Asn-479–Ala-481, and Asp-495 contribute to the ATP site.

The protein belongs to the chaperonin (HSP60) family. Forms a cylinder of 14 subunits composed of two heptameric rings stacked back-to-back. Interacts with the co-chaperonin GroES. UMPylated on a tyrosine residue by YdiU under ATP-limited conditions.

Its subcellular location is the cytoplasm. It carries out the reaction ATP + H2O + a folded polypeptide = ADP + phosphate + an unfolded polypeptide.. UMPylation of the chaperone by YdiU negatively regulates its activity, facilitating Salmonella survival under ATP-limited conditions. Functionally, together with its co-chaperonin GroES, plays an essential role in assisting protein folding. The GroEL-GroES system forms a nano-cage that allows encapsulation of the non-native substrate proteins and provides a physical environment optimized to promote and accelerate protein folding. The sequence is that of Chaperonin GroEL from Salmonella typhimurium (strain LT2 / SGSC1412 / ATCC 700720).